Consider the following 334-residue polypeptide: Protein-methionine-sulfoxide reductase catalytic subunit MsrP (334 aa).

The segment at residues Met1–Ala44 is a signal peptide (tat-type signal). Mo-molybdopterin contacts are provided by residues Asn88, Tyr91–Glu92, Cys146, Thr181, Asn233, Arg238, and Gly249–Lys251.

It belongs to the MsrP family. In terms of assembly, heterodimer of a catalytic subunit (MsrP) and a heme-binding subunit (MsrQ). It depends on Mo-molybdopterin as a cofactor. Predicted to be exported by the Tat system. The position of the signal peptide cleavage has not been experimentally proven.

The protein localises to the periplasm. The catalysed reaction is L-methionyl-[protein] + a quinone + H2O = L-methionyl-(S)-S-oxide-[protein] + a quinol. The enzyme catalyses L-methionyl-[protein] + a quinone + H2O = L-methionyl-(R)-S-oxide-[protein] + a quinol. Functionally, part of the MsrPQ system that repairs oxidized periplasmic proteins containing methionine sulfoxide residues (Met-O), using respiratory chain electrons. Thus protects these proteins from oxidative-stress damage caused by reactive species of oxygen and chlorine generated by the host defense mechanisms. MsrPQ is essential for the maintenance of envelope integrity under bleach stress, rescuing a wide series of structurally unrelated periplasmic proteins from methionine oxidation, including the primary periplasmic chaperone SurA and the lipoprotein Pal. The catalytic subunit MsrP is non-stereospecific, being able to reduce both (R-) and (S-) diastereoisomers of methionine sulfoxide. This chain is Protein-methionine-sulfoxide reductase catalytic subunit MsrP, found in Escherichia coli O6:H1 (strain CFT073 / ATCC 700928 / UPEC).